A 352-amino-acid polypeptide reads, in one-letter code: RAD51-associated protein 1 (352 aa).

Residues 1–10 (MVRPVRHKKP) are compositionally biased toward basic residues. Disordered stretches follow at residues 1–78 (MVRP…TFSI) and 115–144 (TNVQ…HISN). A phosphoserine mark is found at S19 and S21. The interaction with DNA stretch occupies residues 30–49 (VPLNKKSRTAPKELKQDKPK). Residues 39–72 (APKELKQDKPKPNLNNLRKEEIPVQEKTPKKRLP) show a composition bias toward basic and acidic residues. T66 is modified (phosphothreonine). 2 positions are modified to phosphoserine: S120 and S124. Over residues 132–144 (KIETMNKSPHISN) the composition is skewed to polar residues. An SIM motif motif is present at residues 154–159 (LDKITV). A disordered region spans residues 162–323 (DVGGVQGKRK…RSSSSPLVVV (162 aa)). Over residues 188 to 221 (SDGDSANDTEPDFAPGEDSEDDSDFCESEDNDED) the composition is skewed to acidic residues. The segment covering 229-247 (VKEIKKKEVKVKSPVEKKE) has biased composition (basic and acidic residues). The interval 243–304 (VEKKEKKSKS…PSAESKKPKW (62 aa)) is interaction with DNA. A Glycyl lysine isopeptide (Lys-Gly) (interchain with G-Cter in ubiquitin; alternate) cross-link involves residue K251. K269 is covalently cross-linked (Glycyl lysine isopeptide (Lys-Gly) (interchain with G-Cter in SUMO)). Positions 270–284 (SESQSLPKKVSLSSD) are enriched in polar residues. A Phosphoserine modification is found at S280. The WVPP motif motif lies at 304 to 307 (WVPP). Residues 306–323 (PPAASGGSRSSSSPLVVV) are compositionally biased toward low complexity. The segment at 313 to 352 (SRSSSSPLVVVSVKSPNQSLRLGLSRLARVKPLHPNATST) is interaction with RAD51. Residue S327 is modified to Phosphoserine.

In terms of assembly, monomer; elongated monodisperse monomer. Interacts (via C-terminal region) with RAD51; the interaction is direct. Interacts (via SIM motif) with WDR48/UAF1; WDR48/UAF1 and RAD51AP1 cooperate together to stimulate RAD51-mediated homologous recombination (HR). Interacts (via WVPP motif) with DMC1; the interaction is direct. Interacts with PALB2. Interacts with RAD52. Does not interact with DMC1; lack of interaction is caused by the absence of the WVPP motif in this isoform. In terms of processing, sumoylation with SUMO2/3 by NSMCE2/MMS21 promotes stabilization, possibly by preventing ubiquitination. Sumoylation is required for alternative lengthening of telomeres (ALT) pathway. As to expression, highly expressed in testis and thymus. Lower levels in colon and small intestine. Little or no expression in spleen, prostate, ovary and peripheral blood leukocytes.

It localises to the chromosome. Its subcellular location is the nucleus. The protein localises to the telomere. Functionally, structure-specific DNA-binding protein involved in DNA repair by promoting RAD51-mediated homologous recombination. Acts by stimulating D-Loop formation by RAD51: specifically enhances joint molecule formation through its structure-specific DNA interaction and its interaction with RAD51. Binds single-stranded DNA (ssDNA), double-stranded DNA (dsDNA) and secondary DNA structures, such as D-loop structures: has a strong preference for branched-DNA structures that are obligatory intermediates during joint molecule formation. Cooperates with WDR48/UAF1 to stimulate RAD51-mediated homologous recombination: both WDR48/UAF1 and RAD51AP1 have coordinated role in DNA-binding during homologous recombination and DNA repair. WDR48/UAF1 and RAD51AP1 also have a coordinated role in DNA-binding to promote USP1-mediated deubiquitination of FANCD2. Also involved in meiosis by promoting DMC1-mediated homologous meiotic recombination. Key mediator of alternative lengthening of telomeres (ALT) pathway, a homology-directed repair mechanism of telomere elongation that controls proliferation in aggressive cancers, by stimulating homologous recombination. May also bind RNA; additional evidences are however required to confirm RNA-binding in vivo. This is RAD51-associated protein 1 from Homo sapiens (Human).